A 429-amino-acid chain; its full sequence is Glutamate-1-semialdehyde 2,1-aminomutase (429 aa).

An N6-(pyridoxal phosphate)lysine modification is found at K265.

Belongs to the class-III pyridoxal-phosphate-dependent aminotransferase family. HemL subfamily. Homodimer. Pyridoxal 5'-phosphate is required as a cofactor.

The protein resides in the cytoplasm. The enzyme catalyses (S)-4-amino-5-oxopentanoate = 5-aminolevulinate. The protein operates within porphyrin-containing compound metabolism; protoporphyrin-IX biosynthesis; 5-aminolevulinate from L-glutamyl-tRNA(Glu): step 2/2. This chain is Glutamate-1-semialdehyde 2,1-aminomutase, found in Shewanella pealeana (strain ATCC 700345 / ANG-SQ1).